The following is a 62-amino-acid chain: UPF0339 protein Atu0232 (62 aa).

The protein belongs to the UPF0339 family.

The polypeptide is UPF0339 protein Atu0232 (Agrobacterium fabrum (strain C58 / ATCC 33970) (Agrobacterium tumefaciens (strain C58))).